Reading from the N-terminus, the 216-residue chain is MTRNDLLDRLATTQASALETQGLGLVPMVVEQSGRGERAYDIYSRLLKERVVFMVGEVNDQTANLVVAQLLFLESENPDKDVSLYINSPGGSVSAGLAIYDTMQFIKPDVSTLCMGMAASMGAFLLAAGAKGKRSALPNSRIMIHQPLGGARGQASDIEIQAREILYLRERLNTILSEVTGQPVEKIARDTDRDNFMSGDQAVDYGLIDKVLARRG.

S120 serves as the catalytic Nucleophile. Residue H145 is part of the active site.

The protein belongs to the peptidase S14 family. As to quaternary structure, fourteen ClpP subunits assemble into 2 heptameric rings which stack back to back to give a disk-like structure with a central cavity, resembling the structure of eukaryotic proteasomes.

The protein resides in the cytoplasm. It catalyses the reaction Hydrolysis of proteins to small peptides in the presence of ATP and magnesium. alpha-casein is the usual test substrate. In the absence of ATP, only oligopeptides shorter than five residues are hydrolyzed (such as succinyl-Leu-Tyr-|-NHMec, and Leu-Tyr-Leu-|-Tyr-Trp, in which cleavage of the -Tyr-|-Leu- and -Tyr-|-Trp bonds also occurs).. Functionally, cleaves peptides in various proteins in a process that requires ATP hydrolysis. Has a chymotrypsin-like activity. Plays a major role in the degradation of misfolded proteins. This chain is ATP-dependent Clp protease proteolytic subunit, found in Cupriavidus necator (strain ATCC 17699 / DSM 428 / KCTC 22496 / NCIMB 10442 / H16 / Stanier 337) (Ralstonia eutropha).